We begin with the raw amino-acid sequence, 658 residues long: ATP-dependent zinc metalloprotease FtsH 4 (658 aa).

The segment at 1 to 22 (MREPTNRQGSPGPGEPRPPAQG) is disordered. Residues 1-28 (MREPTNRQGSPGPGEPRPPAQGRPRFPT) lie on the Cytoplasmic side of the membrane. A helical membrane pass occupies residues 29–49 (WILWVALLALALWNVYTFFWP). The Extracellular portion of the chain corresponds to 50–149 (SSGARLNIPY…TVKIDQAGGS (100 aa)). Residues 95 to 114 (QVLSPGDPVPPGTSPNEIRT) form a disordered region. The chain crosses the membrane as a helical span at residues 150-170 (VWPSLLATIVPLFLFIGLMVY). Topologically, residues 171–658 (LGRSMSRGQQ…AAPAAAADSV (488 aa)) are cytoplasmic. 243 to 250 (GPPGTGKT) contributes to the ATP binding site. H464 provides a ligand contact to Zn(2+). E465 is an active-site residue. Zn(2+) is bound by residues H468 and D540.

This sequence in the central section; belongs to the AAA ATPase family. In the C-terminal section; belongs to the peptidase M41 family. Homohexamer. It depends on Zn(2+) as a cofactor.

The protein localises to the cell membrane. In terms of biological role, acts as a processive, ATP-dependent zinc metallopeptidase for both cytoplasmic and membrane proteins. Plays a role in the quality control of integral membrane proteins. The sequence is that of ATP-dependent zinc metalloprotease FtsH 4 (ftsh4) from Sphaerobacter thermophilus (strain ATCC 49802 / DSM 20745 / KCCM 41009 / NCIMB 13125 / S 6022).